The following is a 201-amino-acid chain: AVPTETTTTCDGNHVHRLSCDIGVISVQTALYGREDSETCIEGKSLQQISNTECSLLGAVDVLKSRCDGKKVCELSTNIFRPSDPCSDTYKYLQTKYNCFPAIYLVTCEHSVAHLHCDVGQVISVYNADYGRNDHTTCSYERVPSQIQNRDCSNPTSKVAESCSGKNNCTIEASNLVFGDPCVGIYKYLEVAYVCQYPSIV.

Cystine bridges form between cysteine 10–cysteine 40, cysteine 20–cysteine 99, cysteine 54–cysteine 86, cysteine 67–cysteine 73, cysteine 108–cysteine 138, cysteine 117–cysteine 195, cysteine 152–cysteine 182, and cysteine 163–cysteine 169. 2 consecutive SUEL-type lectin domains span residues 18-100 (LSCD…YNCF) and 107-196 (TCEH…YVCQ). N-linked (GlcNAc...) asparagine glycosylation occurs at asparagine 168.

As to quaternary structure, homodimer; non-covalently linked.

Rhamnose-binding lectin. Also binds melibiose, raffinose, D-galactose, L-arabinose, D-fucose, maltose and D-glucose with decreasing affinity. Does not bind D-arabinose, L-fucose, lactose, xylose or 2-deoxy-D-galactose. Shows strong hemagglutinating activity against rabbit erythrocytes. This chain is L-rhamnose-binding lectin SML, found in Scomberomorus niphonius (Japanese Spanish mackerel).